The primary structure comprises 175 residues: S-fimbrial protein subunit SfaG (175 aa).

Residues 1–27 (MVKDIIKTVTFSCMLAGSMFVTCHVCA) form the signal peptide. Cysteines 43 and 83 form a disulfide.

The protein belongs to the fimbrial protein family.

It localises to the fimbrium. Fimbriae (also called pili), polar filaments radiating from the surface of the bacterium to a length of 0.5-1.5 micrometers and numbering 100-300 per cell, enable bacteria to colonize the epithelium of specific host organs. In terms of biological role, a minor fimbrial subunit. This protein is necessary for full expression of S-specific binding. S-fimbrial adhesins enable pathogenic E.coli causing urinary-tract infections or newborn meningitis to attach to glycoproteins terminating with alpha-sialic acid-(2-3)-beta-Gal. This Escherichia coli O6:K15:H31 (strain 536 / UPEC) protein is S-fimbrial protein subunit SfaG (sfaG).